The chain runs to 442 residues: Probable glycine dehydrogenase (decarboxylating) subunit 1 (442 aa).

It belongs to the GcvP family. N-terminal subunit subfamily. As to quaternary structure, the glycine cleavage system is composed of four proteins: P, T, L and H. In this organism, the P 'protein' is a heterodimer of two subunits.

It catalyses the reaction N(6)-[(R)-lipoyl]-L-lysyl-[glycine-cleavage complex H protein] + glycine + H(+) = N(6)-[(R)-S(8)-aminomethyldihydrolipoyl]-L-lysyl-[glycine-cleavage complex H protein] + CO2. Its function is as follows. The glycine cleavage system catalyzes the degradation of glycine. The P protein binds the alpha-amino group of glycine through its pyridoxal phosphate cofactor; CO(2) is released and the remaining methylamine moiety is then transferred to the lipoamide cofactor of the H protein. This is Probable glycine dehydrogenase (decarboxylating) subunit 1 from Geotalea uraniireducens (strain Rf4) (Geobacter uraniireducens).